The primary structure comprises 979 residues: Glycine dehydrogenase (decarboxylating) (979 aa).

Lys724 is subject to N6-(pyridoxal phosphate)lysine.

This sequence belongs to the GcvP family. The glycine cleavage system is composed of four proteins: P, T, L and H. The cofactor is pyridoxal 5'-phosphate.

The enzyme catalyses N(6)-[(R)-lipoyl]-L-lysyl-[glycine-cleavage complex H protein] + glycine + H(+) = N(6)-[(R)-S(8)-aminomethyldihydrolipoyl]-L-lysyl-[glycine-cleavage complex H protein] + CO2. Functionally, the glycine cleavage system catalyzes the degradation of glycine. The P protein binds the alpha-amino group of glycine through its pyridoxal phosphate cofactor; CO(2) is released and the remaining methylamine moiety is then transferred to the lipoamide cofactor of the H protein. This chain is Glycine dehydrogenase (decarboxylating), found in Nostoc punctiforme (strain ATCC 29133 / PCC 73102).